The sequence spans 1083 residues: Alpha-mannosidase (1083 aa).

Position 2 is an N-acetylserine (serine 2). The Zn(2+) site is built by histidine 298, aspartate 300, aspartate 411, and histidine 626. Aspartate 411 acts as the Nucleophile in catalysis.

Belongs to the glycosyl hydrolase 38 family. In terms of assembly, composed of isoforms with three constituent polypeptides described as [(107 kDa)-n (73 kDa)-(6-n) (31 kDa)-(6-n)], where n is 0-6. The 73 kDa and the 31 kDa polypeptides may be proteolytic derivatives of the 107 kDa polypeptide in the vacuole. Oligomerizes in the cytoplasm and retains its oligomeric form during import into the vacuole. The cofactor is Zn(2+). In terms of processing, the N-terminus is blocked.

The protein resides in the vacuole. The enzyme catalyses Hydrolysis of terminal, non-reducing alpha-D-mannose residues in alpha-D-mannosides.. In terms of biological role, degrades free oligosaccharides in the vacuole. The chain is Alpha-mannosidase (AMS1) from Saccharomyces cerevisiae (strain ATCC 204508 / S288c) (Baker's yeast).